We begin with the raw amino-acid sequence, 346 residues long: Threonylcarbamoyl-AMP synthase (346 aa).

The YrdC-like domain maps to 18–205 (DPQIAQAAAL…IPVLLRPGGI (188 aa)). Position 40 (T40) interacts with L-threonine. Positions 63 and 67 each coordinate ATP. H72 contacts L-threonine. Residue T123 coordinates ATP. Positions 127 and 147 each coordinate L-threonine. 2 residues coordinate ATP: S149 and S157. S187 is an L-threonine binding site. ATP contacts are provided by R201 and Y240.

This sequence belongs to the SUA5 family.

It localises to the cytoplasm. The enzyme catalyses L-threonine + hydrogencarbonate + ATP = L-threonylcarbamoyladenylate + diphosphate + H2O. Required for the formation of a threonylcarbamoyl group on adenosine at position 37 (t(6)A37) in tRNAs that read codons beginning with adenine. Catalyzes the conversion of L-threonine, HCO(3)(-)/CO(2) and ATP to give threonylcarbamoyl-AMP (TC-AMP) as the acyladenylate intermediate, with the release of diphosphate. Is also able to catalyze the reverse reaction in vitro, i.e. the formation of ATP from TC-AMP and PPi. This Bacillus subtilis (strain 168) protein is Threonylcarbamoyl-AMP synthase (ywlC).